The following is a 465-amino-acid chain: MAP kinase-interacting serine/threonine-protein kinase 1 (465 aa).

Over residues 1-11 (MVSSQKLEKPI) the composition is skewed to basic and acidic residues. Residues 1–40 (MVSSQKLEKPIEMGSSEPLPIADGDRRRKKKRRGRATDSL) are disordered. The residue at position 39 (Ser-39) is a Phosphoserine. Positions 49-374 (KLTSELLGEG…AAQVLQHPWV (326 aa)) constitute a Protein kinase domain. ATP contacts are provided by residues 55–63 (LGEGAYAKV) and Lys-78. Residues 185-203 (APTSLGSSDPPTSASQVAG) are compositionally biased toward polar residues. Positions 185–204 (APTSLGSSDPPTSASQVAGT) are disordered. Asp-211 (proton acceptor) is an active-site residue. 2 positions are modified to phosphoserine: Ser-221 and Ser-226. A phosphothreonine mark is found at Thr-250, Thr-255, and Thr-385. The segment at 446 to 465 (RRRALAQAGRGEDRSPPTAL) is disordered. Basic and acidic residues predominate over residues 455–465 (RGEDRSPPTAL). Position 460 is a phosphoserine (Ser-460).

The protein belongs to the protein kinase superfamily. CAMK Ser/Thr protein kinase family. As to quaternary structure, interacts with the C-terminal regions of EIF4G1 and EIF4G2. Also binds to dephosphorylated ERK1 and ERK2, and to the p38 kinases. It depends on Mg(2+) as a cofactor. Post-translationally, dual phosphorylation of Thr-250 and Thr-255 activates the kinase. Phosphorylation of Thr-385 activates the kinase. MAPK3/ERK1 is one of the kinases which activate MKNK1/MNK1. Phosphorylation by PAK2 leads to a reduced phosphorylation of EIF4G1. Ubiquitous.

It localises to the cytoplasm. The protein localises to the nucleus. The enzyme catalyses L-seryl-[protein] + ATP = O-phospho-L-seryl-[protein] + ADP + H(+). It carries out the reaction L-threonyl-[protein] + ATP = O-phospho-L-threonyl-[protein] + ADP + H(+). With respect to regulation, phosphorylated and activated by the p38 kinases and kinases in the Erk pathway. Functionally, may play a role in the response to environmental stress and cytokines. Appears to regulate translation by phosphorylating EIF4E, thus increasing the affinity of this protein for the 7-methylguanosine-containing mRNA cap. The polypeptide is MAP kinase-interacting serine/threonine-protein kinase 1 (MKNK1) (Homo sapiens (Human)).